The primary structure comprises 282 residues: MPAQIISGTELSKNIKFNVAEKIQHYLQQGKRAPGLAVILVGADPASQVYVGSKRRSCEELGIYSKSYDLPAETTEQELLTLIEQLNQDPQIDGILVQLPLPKKINSTKVIEHISPTKDIDGFHPYNVGRLCQRIPTLRACTPLGIMKLLETTGVDLYGQHAVIVGASNIVGRPMALELLLAGCTVTVTHRFTKDLKSHVHQADILVVAVGKPHIIPGEWIKEGAIVIDVGINRVDGKLVGDVQYDEASKKASFITPVPGGVGPMTVAMLMFNTLLAYESHS.

NADP(+) contacts are provided by residues 166-168 (GAS) and Ile-232.

Belongs to the tetrahydrofolate dehydrogenase/cyclohydrolase family. As to quaternary structure, homodimer.

The catalysed reaction is (6R)-5,10-methylene-5,6,7,8-tetrahydrofolate + NADP(+) = (6R)-5,10-methenyltetrahydrofolate + NADPH. The enzyme catalyses (6R)-5,10-methenyltetrahydrofolate + H2O = (6R)-10-formyltetrahydrofolate + H(+). It participates in one-carbon metabolism; tetrahydrofolate interconversion. Functionally, catalyzes the oxidation of 5,10-methylenetetrahydrofolate to 5,10-methenyltetrahydrofolate and then the hydrolysis of 5,10-methenyltetrahydrofolate to 10-formyltetrahydrofolate. The polypeptide is Bifunctional protein FolD (Histophilus somni (strain 129Pt) (Haemophilus somnus)).